The following is a 577-amino-acid chain: Aspartate--tRNA(Asp/Asn) ligase (577 aa).

E171 contributes to the L-aspartate binding site. Residues 195–198 (QLFK) form an aspartate region. Residue R217 participates in L-aspartate binding. ATP is bound by residues 217–219 (RDE) and Q226. H444 is an L-aspartate binding site. E474 serves as a coordination point for ATP. R481 contacts L-aspartate. 526 to 529 (GFDR) serves as a coordination point for ATP.

Belongs to the class-II aminoacyl-tRNA synthetase family. Type 1 subfamily. In terms of assembly, homodimer.

It localises to the cytoplasm. The catalysed reaction is tRNA(Asx) + L-aspartate + ATP = L-aspartyl-tRNA(Asx) + AMP + diphosphate. Its function is as follows. Aspartyl-tRNA synthetase with relaxed tRNA specificity since it is able to aspartylate not only its cognate tRNA(Asp) but also tRNA(Asn). Reaction proceeds in two steps: L-aspartate is first activated by ATP to form Asp-AMP and then transferred to the acceptor end of tRNA(Asp/Asn). The sequence is that of Aspartate--tRNA(Asp/Asn) ligase from Helicobacter pylori (strain P12).